Reading from the N-terminus, the 306-residue chain is tRNA dimethylallyltransferase (306 aa).

Position 2–9 (2–9 (GPTASGKT)) interacts with ATP. 4–9 (TASGKT) contributes to the substrate binding site. 2 interaction with substrate tRNA regions span residues 27–30 (DSVQ) and 152–156 (QRIVR).

Belongs to the IPP transferase family. As to quaternary structure, monomer. The cofactor is Mg(2+).

It catalyses the reaction adenosine(37) in tRNA + dimethylallyl diphosphate = N(6)-dimethylallyladenosine(37) in tRNA + diphosphate. In terms of biological role, catalyzes the transfer of a dimethylallyl group onto the adenine at position 37 in tRNAs that read codons beginning with uridine, leading to the formation of N6-(dimethylallyl)adenosine (i(6)A). This Magnetococcus marinus (strain ATCC BAA-1437 / JCM 17883 / MC-1) protein is tRNA dimethylallyltransferase.